Reading from the N-terminus, the 533-residue chain is Thromboxane-A synthase (533 aa).

Over 1-10 (MEVLGLLKFE) the chain is Cytoplasmic. Residues 11–31 (VSGTIVTVTLLVALLALLKWY) form a helical membrane-spanning segment. The Lumenal portion of the chain corresponds to 32-75 (SMSAFSRLEKLGIRHPKPSPFVGNLMFFRQGFWESQLELRERYG). The chain crosses the membrane as a helical span at residues 76–96 (PLCGYYLGRRMHVVISEPDMI). Residues 97–223 (KQVLVENFSN…RRASTFCIPR (127 aa)) lie on the Cytoplasmic side of the membrane. Residues 224 to 244 (PLLVLILSFPSIMVPLARILP) traverse the membrane as a helical segment. Topologically, residues 245–335 (NKNRDELNGF…FTVDEIVGQA (91 aa)) are lumenal. The chain crosses the membrane as a helical span at residues 336–356 (FLFLIAGHEVITNTLSFITYL). The Cytoplasmic portion of the chain corresponds to 357–533 (LATHPDCQER…NGVYIKIVSR (177 aa)). Cys-479 is a heme binding site.

Belongs to the cytochrome P450 family. Monomer. The cofactor is heme. Expressed primarily in lung, kidney, and spleen.

It is found in the endoplasmic reticulum membrane. It catalyses the reaction prostaglandin H2 = thromboxane A2. The catalysed reaction is prostaglandin H2 = (12S)-hydroxy-(5Z,8E,10E)-heptadecatrienoate + malonaldehyde. It carries out the reaction a hydroperoxyeicosatetraenoate = an oxoeicosatetraenoate + H2O. The enzyme catalyses (15S)-hydroperoxy-(5Z,8Z,11Z,13E)-eicosatetraenoate = 15-oxo-(5Z,8Z,11Z,13E)-eicosatetraenoate + H2O. It catalyses the reaction (15S)-hydroperoxy-(5Z,8Z,11Z,13E)-eicosatetraenoate + AH2 = (15S)-hydroxy-(5Z,8Z,11Z,13E)-eicosatetraenoate + A + H2O. In terms of biological role, catalyzes the conversion of prostaglandin H2 (PGH2) to thromboxane A2 (TXA2), a potent inducer of blood vessel constriction and platelet aggregation. Also cleaves PGH2 to 12-hydroxy-heptadecatrienoicacid (12-HHT) and malondialdehyde, which is known to act as a mediator of DNA damage. 12-HHT and malondialdehyde are formed stoichiometrically in the same amounts as TXA2. Additionally, displays dehydratase activity, toward (15S)-hydroperoxy-(5Z,8Z,11Z,13E)-eicosatetraenoate (15(S)-HPETE) producing 15-KETE and 15-HETE. This is Thromboxane-A synthase (Tbxas1) from Mus musculus (Mouse).